A 350-amino-acid chain; its full sequence is LIM domain-containing protein unc-95 (350 aa).

Polar residues predominate over residues 1–37 (MTISPQPSHQQFESYQWTTESRSSQQRHGTGTPSQDG). The disordered stretch occupies residues 1 to 65 (MTISPQPSHQ…ESRNSNKDKV (65 aa)). A compositionally biased stretch (basic and acidic residues) spans 45–65 (PVERHVARWRSESRNSNKDKV). A coiled-coil region spans residues 83 to 110 (LTALKNDVEQTTEIIRRKQEQMRMERRQ). 3 disordered regions span residues 177–198 (RRGQ…EIEY), 206–225 (PEEQ…METD), and 235–262 (MSEE…SGSP). One can recognise an LIM zinc-binding domain in the interval 268–334 (AVCAYCSEEI…HDCFYKLYNG (67 aa)).

Post-translationally, ubiquitinated. Ubiquitination by rnf-5 leads to dissociation from muscle dense bodies during molting and is required for ecdysis. As to expression, expressed in the body wall muscles, vulval muscles and the anal muscles. Expressed in the muscle arms of the head muscle cells that form neuromuscular junctions and in the anal depressor muscle.

The protein localises to the cytoplasm. It localises to the nucleus. Its subcellular location is the cell membrane. The protein resides in the myofibril. It is found in the sarcomere. The protein localises to the m line. It localises to the cell junction. Its subcellular location is the focal adhesion. Required for the assembly and integrity of muscle dense bodies, which establish the adhesion sites of the muscle cells to the extracellular matrix. Decreased localization of unc-95 to dense bodies and their subsequent dissociation plays an important role in ecdysis during molting. Involved in the organization of the muscle sarcomeric structure and thereby required for locomotion. This is LIM domain-containing protein unc-95 from Caenorhabditis elegans.